We begin with the raw amino-acid sequence, 608 residues long: MSQRIAILPEIITNKIAAGEVVERPASVIKELIENSLDAGATDISVEIAAGGRRLIRITDNGHGMSREDALLSLERHATSKIRSDNDLDGIHTLGFRGEALPSVASVSRLRLSSRETDSPEGTEIIVEGGKVRDVRACGMAPGTVISVEQIFFNTPARLKFLRSAETEAGHVGDCLTRMAISRPDVAFSCSSDGRDLLRVQRGDLLRRLSQALGKGTAASLHELHLSRDGIDISGYISSPAACRSTTSAMFTYINGRFIRDKVIQHAIMQAYRGVMDRGRYPVVALFIQLPPAEVDVNVHPTKHEVRFRRQSLVHDTLQSALEELLKRSPWLPRPQTPVQPAAVGAPSISQAYRERVAAAAQASLAMARKPDPPRFHETARPQPDPRHTPGTESVSVREAPTPFLPREPAADPQGYFSALRIIGQFHDEYILCQSGDQLVIIDQHAASERVAFQKLRHQFDTDGVESQRLLFPETLELSFSEADTARRFGNELARIGFELEPFGGNTVIVSAIPRLAIARDASGLIRDLLAELTQLGASSAFLDSRDALLSRIACHSVVRGVHRLEERQIRELLHGMDGTDFAASCPHGRPVSHVITLGELERIFKRT.

Positions 363-397 (ASLAMARKPDPPRFHETARPQPDPRHTPGTESVSV) are disordered. Basic and acidic residues predominate over residues 369 to 390 (RKPDPPRFHETARPQPDPRHTP).

It belongs to the DNA mismatch repair MutL/HexB family.

Functionally, this protein is involved in the repair of mismatches in DNA. It is required for dam-dependent methyl-directed DNA mismatch repair. May act as a 'molecular matchmaker', a protein that promotes the formation of a stable complex between two or more DNA-binding proteins in an ATP-dependent manner without itself being part of a final effector complex. This is DNA mismatch repair protein MutL from Pelobacter propionicus (strain DSM 2379 / NBRC 103807 / OttBd1).